A 213-amino-acid polypeptide reads, in one-letter code: uncharacterized protein (213 aa).

The next 3 helical transmembrane spans lie at 26 to 46, 112 to 132, and 136 to 156; these read FINFIRIAIFIVMAWIGGLKV, ASYIIGAIIVTVGILTLAGIW, and AGLAGGLLTFGMSIVTLSFLI.

The protein resides in the cell membrane. This is an uncharacterized protein from Haemophilus influenzae (strain ATCC 51907 / DSM 11121 / KW20 / Rd).